Reading from the N-terminus, the 120-residue chain is Large ribosomal subunit protein uL18 (120 aa).

The protein belongs to the universal ribosomal protein uL18 family. In terms of assembly, part of the 50S ribosomal subunit; part of the 5S rRNA/L5/L18/L25 subcomplex. Contacts the 5S and 23S rRNAs.

In terms of biological role, this is one of the proteins that bind and probably mediate the attachment of the 5S RNA into the large ribosomal subunit, where it forms part of the central protuberance. The protein is Large ribosomal subunit protein uL18 of Oleidesulfovibrio alaskensis (strain ATCC BAA-1058 / DSM 17464 / G20) (Desulfovibrio alaskensis).